Reading from the N-terminus, the 303-residue chain is Probable cell division protein WhiA (303 aa).

The H-T-H motif DNA-binding region spans 272–303 (SIQQVADALEFPITKSGVNHRLRKINKIADDL).

The protein belongs to the WhiA family.

Its function is as follows. Involved in cell division and chromosome segregation. The protein is Probable cell division protein WhiA of Streptococcus pyogenes serotype M12 (strain MGAS2096).